Consider the following 178-residue polypeptide: Acireductone dioxygenase (178 aa).

Fe(2+) is bound by residues histidine 100, histidine 102, glutamate 106, and histidine 145. Residues histidine 100, histidine 102, glutamate 106, and histidine 145 each contribute to the Ni(2+) site.

Belongs to the acireductone dioxygenase (ARD) family. Monomer. It depends on Fe(2+) as a cofactor. Ni(2+) is required as a cofactor.

It catalyses the reaction 1,2-dihydroxy-5-(methylsulfanyl)pent-1-en-3-one + O2 = 3-(methylsulfanyl)propanoate + CO + formate + 2 H(+). The catalysed reaction is 1,2-dihydroxy-5-(methylsulfanyl)pent-1-en-3-one + O2 = 4-methylsulfanyl-2-oxobutanoate + formate + 2 H(+). It functions in the pathway amino-acid biosynthesis; L-methionine biosynthesis via salvage pathway; L-methionine from S-methyl-5-thio-alpha-D-ribose 1-phosphate: step 5/6. Catalyzes 2 different reactions between oxygen and the acireductone 1,2-dihydroxy-3-keto-5-methylthiopentene (DHK-MTPene) depending upon the metal bound in the active site. Fe-containing acireductone dioxygenase (Fe-ARD) produces formate and 2-keto-4-methylthiobutyrate (KMTB), the alpha-ketoacid precursor of methionine in the methionine recycle pathway. Ni-containing acireductone dioxygenase (Ni-ARD) produces methylthiopropionate, carbon monoxide and formate, and does not lie on the methionine recycle pathway. This is Acireductone dioxygenase (mtnD) from Bacillus subtilis (strain 168).